We begin with the raw amino-acid sequence, 340 residues long: Farnesyl pyrophosphate synthase 1 (340 aa).

Isopentenyl diphosphate-binding residues include lysine 47, arginine 50, and glutamine 85. Mg(2+) is bound by residues aspartate 92 and aspartate 96. Arginine 101 is a dimethylallyl diphosphate binding site. Residue arginine 102 coordinates isopentenyl diphosphate. Positions 188, 189, 227, 244, and 253 each coordinate dimethylallyl diphosphate.

This sequence belongs to the FPP/GGPP synthase family. Mg(2+) serves as cofactor. As to expression, mainly expressed in trichomes and flowers, and, to a lower extent, in leaves, roots and stems.

It localises to the cytoplasm. Its subcellular location is the nucleus. The catalysed reaction is isopentenyl diphosphate + dimethylallyl diphosphate = (2E)-geranyl diphosphate + diphosphate. It carries out the reaction isopentenyl diphosphate + (2E)-geranyl diphosphate = (2E,6E)-farnesyl diphosphate + diphosphate. The protein operates within isoprenoid biosynthesis; farnesyl diphosphate biosynthesis; farnesyl diphosphate from geranyl diphosphate and isopentenyl diphosphate: step 1/1. It participates in sesquiterpene biosynthesis. Its pathway is isoprenoid biosynthesis; geranyl diphosphate biosynthesis; geranyl diphosphate from dimethylallyl diphosphate and isopentenyl diphosphate: step 1/1. Catalyzes the sequential condensation of isopentenyl pyrophosphate with the allylic pyrophosphates, dimethylallyl pyrophosphate, and then with the resultant geranylpyrophosphate to the ultimate product farnesyl pyrophosphate. The sequence is that of Farnesyl pyrophosphate synthase 1 from Cannabis sativa (Hemp).